The sequence spans 184 residues: MLVSSSVLKDDSSLRIFKESPNEFEYIIKRHDMDDRKEDTESKERRSTMGSSFIRFGRGQSFFNNLDNSAFDNEIDSKVSRHPRWKSPDIVIRFGRSGMKSTNDEQPKRGKNDLNFIRFGRNIQIVPTDFDLSAVCSALMSNDAISDAGLHPDVTRLFRLCNNLNKITGEISLDSLETNSNHRE.

A propeptide spanning residues 1–44 (MLVSSSVLKDDSSLRIFKESPNEFEYIIKRHDMDDRKEDTESKE) is cleaved from the precursor. Phe-56 bears the Phenylalanine amide mark. The propeptide occupies 59–83 (GQSFFNNLDNSAFDNEIDSKVSRHP). A Phenylalanine amide modification is found at Phe-94. Residues 97–107 (SGMKSTNDEQP) constitute a propeptide that is removed on maturation. Phe-119 carries the post-translational modification Phenylalanine amide. Positions 122–184 (NIQIVPTDFD…SLETNSNHRE (63 aa)) are excised as a propeptide.

It belongs to the FARP (FMRFamide related peptide) family. Expressed throughout the central nervous system.

The protein localises to the secreted. Functionally, in insects, FMRFamide and related peptides have modulatory actions at skeletal neuromuscular junctions, and peptides that are immunologically related to FMRFamide are released into the circulation from neurohemal organs. This chain is FMRFamide-related peptides, found in Camponotus floridanus (Florida carpenter ant).